Reading from the N-terminus, the 117-residue chain is G antigen 5 (117 aa).

Residues Met-1 to Cys-117 form a disordered region. 2 stretches are compositionally biased toward acidic residues: residues Phe-32–Glu-45 and Glu-87–Glu-96. Residues Glu-103–Cys-117 are compositionally biased toward basic and acidic residues.

This sequence belongs to the GAGE family. In terms of tissue distribution, expressed in a variety of tumor tissues but not in normal tissues, except testis.

In Homo sapiens (Human), this protein is G antigen 5 (GAGE5).